Consider the following 31-residue polypeptide: Photosystem II reaction center protein T (31 aa).

Residues 3 to 23 (ALVYTFLLIGTLGVIFFAIFF) form a helical membrane-spanning segment.

It belongs to the PsbT family. As to quaternary structure, PSII is composed of 1 copy each of membrane proteins PsbA, PsbB, PsbC, PsbD, PsbE, PsbF, PsbH, PsbI, PsbJ, PsbK, PsbL, PsbM, PsbT, PsbY, PsbZ, Psb30/Ycf12, at least 3 peripheral proteins of the oxygen-evolving complex and a large number of cofactors. It forms dimeric complexes.

The protein resides in the plastid. It is found in the chloroplast thylakoid membrane. Functionally, found at the monomer-monomer interface of the photosystem II (PS II) dimer, plays a role in assembly and dimerization of PSII. PSII is a light-driven water plastoquinone oxidoreductase, using light energy to abstract electrons from H(2)O, generating a proton gradient subsequently used for ATP formation. This chain is Photosystem II reaction center protein T, found in Euglena gracilis.